Reading from the N-terminus, the 225-residue chain is Phosphoglycolate phosphatase (225 aa).

Catalysis depends on Asp11, which acts as the Nucleophile. Residues Asp11, Asp13, and Asp174 each coordinate Mg(2+).

It belongs to the HAD-like hydrolase superfamily. CbbY/CbbZ/Gph/YieH family. The cofactor is Mg(2+).

It carries out the reaction 2-phosphoglycolate + H2O = glycolate + phosphate. It participates in organic acid metabolism; glycolate biosynthesis; glycolate from 2-phosphoglycolate: step 1/1. Its function is as follows. Specifically catalyzes the dephosphorylation of 2-phosphoglycolate. Is involved in the dissimilation of the intracellular 2-phosphoglycolate formed during the DNA repair of 3'-phosphoglycolate ends, a major class of DNA lesions induced by oxidative stress. This is Phosphoglycolate phosphatase from Nitrosococcus oceani (strain ATCC 19707 / BCRC 17464 / JCM 30415 / NCIMB 11848 / C-107).